The primary structure comprises 334 residues: WD repeat domain 54 (334 aa).

WD repeat units follow at residues 162-206 (GHQT…TLLT), 208-247 (IAGF…LHIQ), and 250-289 (AHAR…ESGS).

As to quaternary structure, homodimer and homotrimer; forms tight forms of dimers and trimers. Interacts with IZUMO1 and IZUMO1R/JUNO. Post-translationally, cross-linked to tightly form both dimers and trimers by TGM2. Cross-linking enhances the activation of EGF receptor-mediated signaling pathway. Cross-linking is inhibited by EGF. Ubiquitinated. EGF increases ubiquitination. Widely expressed in the ovary and testis (at protein level).

It is found in the vesicle. The protein localises to the cytoplasm. Its subcellular location is the cell membrane. In terms of biological role, plays a role in the adhesion and fusion of the sperm-oocyte membrane through its interactions with IZUMO1 and IZUMO1R/JUNO. When cross-linked to form dimers and trimers, it has a regulatory effect on ERK signaling pathway activity in response to EGF stimulation. Colocalizes with the EGF receptor in WDR54-specific vesicle where it sustains the internalization and controls the degradation of the EGF receptor after EGF stimulation. The chain is WD repeat domain 54 (Wdr54) from Rattus norvegicus (Rat).